The primary structure comprises 539 residues: Phosphoenolpyruvate carboxykinase (ATP) (539 aa).

The substrate site is built by arginine 64, tyrosine 206, and lysine 212. ATP contacts are provided by residues lysine 212, histidine 231, and glycine 247–threonine 255. Residues lysine 212 and histidine 231 each contribute to the Mn(2+) site. Mn(2+) is bound at residue aspartate 268. ATP contacts are provided by residues glutamate 296, arginine 332, arginine 448–isoleucine 449, and threonine 454. Arginine 332 contacts substrate.

Belongs to the phosphoenolpyruvate carboxykinase (ATP) family. As to quaternary structure, monomer. Mn(2+) serves as cofactor.

The protein localises to the cytoplasm. It catalyses the reaction oxaloacetate + ATP = phosphoenolpyruvate + ADP + CO2. It functions in the pathway carbohydrate biosynthesis; gluconeogenesis. Involved in the gluconeogenesis. Catalyzes the conversion of oxaloacetate (OAA) to phosphoenolpyruvate (PEP) through direct phosphoryl transfer between the nucleoside triphosphate and OAA. This is Phosphoenolpyruvate carboxykinase (ATP) from Erwinia tasmaniensis (strain DSM 17950 / CFBP 7177 / CIP 109463 / NCPPB 4357 / Et1/99).